The chain runs to 124 residues: Small ribosomal subunit protein uS12 (124 aa).

Position 89 is a 3-methylthioaspartic acid (Asp-89).

This sequence belongs to the universal ribosomal protein uS12 family. Part of the 30S ribosomal subunit. Contacts proteins S8 and S17. May interact with IF1 in the 30S initiation complex.

With S4 and S5 plays an important role in translational accuracy. Its function is as follows. Interacts with and stabilizes bases of the 16S rRNA that are involved in tRNA selection in the A site and with the mRNA backbone. Located at the interface of the 30S and 50S subunits, it traverses the body of the 30S subunit contacting proteins on the other side and probably holding the rRNA structure together. The combined cluster of proteins S8, S12 and S17 appears to hold together the shoulder and platform of the 30S subunit. The chain is Small ribosomal subunit protein uS12 from Edwardsiella ictaluri (strain 93-146).